The following is a 370-amino-acid chain: tRNA-specific 2-thiouridylase MnmA (370 aa).

Residues 24 to 31 and L50 contribute to the ATP site; that span reads AMSGGVDS. C118 functions as the Nucleophile in the catalytic mechanism. Cysteines 118 and 214 form a disulfide. Residue G142 coordinates ATP. Residues 164-166 form an interaction with tRNA region; sequence KDQ. C214 serves as the catalytic Cysteine persulfide intermediate.

Belongs to the MnmA/TRMU family.

The protein resides in the cytoplasm. The enzyme catalyses S-sulfanyl-L-cysteinyl-[protein] + uridine(34) in tRNA + AH2 + ATP = 2-thiouridine(34) in tRNA + L-cysteinyl-[protein] + A + AMP + diphosphate + H(+). Catalyzes the 2-thiolation of uridine at the wobble position (U34) of tRNA, leading to the formation of s(2)U34. In Ehrlichia ruminantium (strain Gardel), this protein is tRNA-specific 2-thiouridylase MnmA.